The following is a 189-amino-acid chain: MFDSIVYFFNKSGFVTTLVLVWISLYLVMTLWVFLYKSIVLKIELRREMQSLSNILNGAQDAPEHFMFNKKRNDETKRYSNELLQAWKHQVLKQSTTGLVVLSIISSTAPFIGLFGTVVEILEAFNNLGALGQASFGVIAPIISKALIATAAGILAAIPAYSFYLILKRKVYDLSVYVQMQVDILSSKK.

3 helical membrane-spanning segments follow: residues 14–34, 99–119, and 147–167; these read FVTTLVLVWISLYLVMTLWVF, LVVLSIISSTAPFIGLFGTVV, and LIATAAGILAAIPAYSFYLIL.

Belongs to the ExbB/TolQ family.

It is found in the cell inner membrane. The chain is Putative biopolymer transport protein ExbB-like 1 from Helicobacter pylori (strain J99 / ATCC 700824) (Campylobacter pylori J99).